A 536-amino-acid chain; its full sequence is Phosphoenolpyruvate carboxykinase (ATP) (536 aa).

Positions 61, 195, and 201 each coordinate substrate. Residues Lys201, His220, and 236–244 (GLSGTGKTT) contribute to the ATP site. Lys201 and His220 together coordinate Mn(2+). Asp257 provides a ligand contact to Mn(2+). Residues Glu285, Arg322, and Thr447 each coordinate ATP. Arg322 lines the substrate pocket.

Belongs to the phosphoenolpyruvate carboxykinase (ATP) family. It depends on Mn(2+) as a cofactor.

It localises to the cytoplasm. It carries out the reaction oxaloacetate + ATP = phosphoenolpyruvate + ADP + CO2. The protein operates within carbohydrate biosynthesis; gluconeogenesis. Involved in the gluconeogenesis. Catalyzes the conversion of oxaloacetate (OAA) to phosphoenolpyruvate (PEP) through direct phosphoryl transfer between the nucleoside triphosphate and OAA. The chain is Phosphoenolpyruvate carboxykinase (ATP) from Sinorhizobium medicae (strain WSM419) (Ensifer medicae).